The primary structure comprises 78 residues: DNA-directed RNA polymerase subunit Rpo5 (78 aa).

The protein belongs to the archaeal Rpo5/eukaryotic RPB5 RNA polymerase subunit family. Part of the RNA polymerase complex.

It is found in the cytoplasm. It carries out the reaction RNA(n) + a ribonucleoside 5'-triphosphate = RNA(n+1) + diphosphate. In terms of biological role, DNA-dependent RNA polymerase (RNAP) catalyzes the transcription of DNA into RNA using the four ribonucleoside triphosphates as substrates. The protein is DNA-directed RNA polymerase subunit Rpo5 of Methanococcus maripaludis (strain C6 / ATCC BAA-1332).